A 157-amino-acid chain; its full sequence is UPF0262 protein RHE_CH00582 (157 aa).

Belongs to the UPF0262 family.

This Rhizobium etli (strain ATCC 51251 / DSM 11541 / JCM 21823 / NBRC 15573 / CFN 42) protein is UPF0262 protein RHE_CH00582.